Here is a 992-residue protein sequence, read N- to C-terminus: GATOR2 complex protein WDR59 (992 aa).

7 WD repeats span residues glutamine 57 to glycine 98, glycine 103 to valine 143, serine 146 to glutamate 185, alanine 189 to asparagine 229, proline 232 to histidine 276, phenylalanine 278 to tyrosine 318, and glutamine 319 to histidine 362. The interval proline 343 to proline 373 is disordered. Residues glutamate 344–proline 373 show a composition bias toward basic and acidic residues. One can recognise an RWD domain in the interval glutamine 393–phenylalanine 494. Serine 564 carries the phosphoserine modification. Residues lysine 660–cysteine 706 form a WD 8 repeat. Phosphoserine occurs at positions 839, 840, and 848. The interval leucine 849–aspartate 870 is disordered. Residues aspartate 853–leucine 869 are compositionally biased toward basic and acidic residues. The C4-type zinc-finger motif lies at tyrosine 919–threonine 939. The Zn(2+) site is built by cysteine 920, cysteine 923, cysteine 932, cysteine 935, cysteine 945, cysteine 956, histidine 961, histidine 964, histidine 967, cysteine 978, cysteine 982, cysteine 984, and cysteine 986. Residues phenylalanine 940–glutamate 989 form an RING-type; atypical zinc finger.

The protein belongs to the WD repeat WDR59 family. In terms of assembly, component of the GATOR2 subcomplex, composed of MIOS, SEC13, SEH1L, WDR24 and WDR59. The GATOR2 complex interacts with CASTOR1 and CASTOR2; the interaction is negatively regulated by arginine. The GATOR2 complex interacts with SESN1, SESN2 and SESN3; the interaction is negatively regulated by amino acids. Interacts with DDB1-CUL4A/B E3 ligase complexes.

The protein localises to the lysosome membrane. Its activity is regulated as follows. The GATOR2 complex is negatively regulated by the upstream amino acid sensors CASTOR1 and SESN2, which sequester the GATOR2 complex in absence of amino acids. In the presence of abundant amino acids, GATOR2 is released from CASTOR1 and SESN2 and activated. Functionally, as a component of the GATOR2 complex, functions as an activator of the amino acid-sensing branch of the mTORC1 signaling pathway. The GATOR2 complex indirectly activates mTORC1 through the inhibition of the GATOR1 subcomplex. GATOR2 probably acts as an E3 ubiquitin-protein ligase toward GATOR1. In the presence of abundant amino acids, the GATOR2 complex mediates ubiquitination of the NPRL2 core component of the GATOR1 complex, leading to GATOR1 inactivation. In the absence of amino acids, GATOR2 is inhibited, activating the GATOR1 complex. This Mus musculus (Mouse) protein is GATOR2 complex protein WDR59.